Consider the following 278-residue polypeptide: Putative carbamate hydrolase RutD (278 aa).

The protein belongs to the AB hydrolase superfamily. Hydrolase RutD family.

It carries out the reaction carbamate + 2 H(+) = NH4(+) + CO2. Involved in pyrimidine catabolism. May facilitate the hydrolysis of carbamate, a reaction that can also occur spontaneously. The chain is Putative carbamate hydrolase RutD from Yersinia enterocolitica serotype O:8 / biotype 1B (strain NCTC 13174 / 8081).